Reading from the N-terminus, the 210-residue chain is Proteasome subunit beta (210 aa).

The propeptide at 1–9 is removed in mature form; by autocatalysis; that stretch reads MDNDKHLKG. The Nucleophile role is filled by Thr10.

It belongs to the peptidase T1B family. In terms of assembly, the 20S proteasome core is composed of 14 alpha and 14 beta subunits that assemble into four stacked heptameric rings, resulting in a barrel-shaped structure. The two inner rings, each composed of seven catalytic beta subunits, are sandwiched by two outer rings, each composed of seven alpha subunits. The catalytic chamber with the active sites is on the inside of the barrel. Has a gated structure, the ends of the cylinder being occluded by the N-termini of the alpha-subunits. Is capped at one or both ends by the proteasome regulatory ATPase, PAN.

It is found in the cytoplasm. It carries out the reaction Cleavage of peptide bonds with very broad specificity.. The formation of the proteasomal ATPase PAN-20S proteasome complex, via the docking of the C-termini of PAN into the intersubunit pockets in the alpha-rings, triggers opening of the gate for substrate entry. Interconversion between the open-gate and close-gate conformations leads to a dynamic regulation of the 20S proteasome proteolysis activity. Functionally, component of the proteasome core, a large protease complex with broad specificity involved in protein degradation. This Methanohalophilus mahii (strain ATCC 35705 / DSM 5219 / SLP) protein is Proteasome subunit beta.